Consider the following 145-residue polypeptide: Immunity protein CdiI (145 aa).

Interacts with cognate toxin fragment CdiA-CT.

Immunity protein component of a toxin-immunity protein module, which functions as a cellular contact-dependent growth inhibition (CDI) system. CDI modules allow bacteria to communicate with and inhibit the growth of closely related neighboring bacteria in a contact-dependent fashion. Protects cells against the 16S rRNase activity of CdiA-CT, its cognate toxin protein, but not against the toxic effects of a similar rRNase, non-cognate CdiA-CT from E.chrysanthemi strain EC16. The protein is Immunity protein CdiI of Enterobacter cloacae subsp. cloacae (strain ATCC 13047 / DSM 30054 / NBRC 13535 / NCTC 10005 / WDCM 00083 / NCDC 279-56).